Here is a 597-residue protein sequence, read N- to C-terminus: Elongation factor 4 (597 aa).

Residues 2-184 form the tr-type G domain; it reads KHIRNFSIIA…NIVTAIPPPE (183 aa). GTP-binding positions include 14-19 and 131-134; these read DHGKST and NKID.

The protein belongs to the TRAFAC class translation factor GTPase superfamily. Classic translation factor GTPase family. LepA subfamily.

Its subcellular location is the cell inner membrane. It carries out the reaction GTP + H2O = GDP + phosphate + H(+). Required for accurate and efficient protein synthesis under certain stress conditions. May act as a fidelity factor of the translation reaction, by catalyzing a one-codon backward translocation of tRNAs on improperly translocated ribosomes. Back-translocation proceeds from a post-translocation (POST) complex to a pre-translocation (PRE) complex, thus giving elongation factor G a second chance to translocate the tRNAs correctly. Binds to ribosomes in a GTP-dependent manner. The protein is Elongation factor 4 of Vibrio atlanticus (strain LGP32) (Vibrio splendidus (strain Mel32)).